A 104-amino-acid polypeptide reads, in one-letter code: Pyrimidine/purine nucleoside phosphorylase (104 aa).

The protein belongs to the nucleoside phosphorylase PpnP family.

It catalyses the reaction a purine D-ribonucleoside + phosphate = a purine nucleobase + alpha-D-ribose 1-phosphate. The enzyme catalyses adenosine + phosphate = alpha-D-ribose 1-phosphate + adenine. It carries out the reaction cytidine + phosphate = cytosine + alpha-D-ribose 1-phosphate. The catalysed reaction is guanosine + phosphate = alpha-D-ribose 1-phosphate + guanine. It catalyses the reaction inosine + phosphate = alpha-D-ribose 1-phosphate + hypoxanthine. The enzyme catalyses thymidine + phosphate = 2-deoxy-alpha-D-ribose 1-phosphate + thymine. It carries out the reaction uridine + phosphate = alpha-D-ribose 1-phosphate + uracil. The catalysed reaction is xanthosine + phosphate = alpha-D-ribose 1-phosphate + xanthine. Functionally, catalyzes the phosphorolysis of diverse nucleosides, yielding D-ribose 1-phosphate and the respective free bases. Can use uridine, adenosine, guanosine, cytidine, thymidine, inosine and xanthosine as substrates. Also catalyzes the reverse reactions. In Janthinobacterium sp. (strain Marseille) (Minibacterium massiliensis), this protein is Pyrimidine/purine nucleoside phosphorylase.